A 505-amino-acid polypeptide reads, in one-letter code: GMP synthase [glutamine-hydrolyzing] (505 aa).

The Glutamine amidotransferase type-1 domain occupies 2-190 (SVVILDFGSQ…FLEICGVARD (189 aa)). Cys79 serves as the catalytic Nucleophile. Active-site residues include His165 and Glu167. The 190-residue stretch at 191–380 (WNAEHIVDEL…LGLPDAIRMR (190 aa)) folds into the GMPS ATP-PPase domain. 218-224 (SGGVDSS) contacts ATP.

Homodimer.

It carries out the reaction XMP + L-glutamine + ATP + H2O = GMP + L-glutamate + AMP + diphosphate + 2 H(+). It participates in purine metabolism; GMP biosynthesis; GMP from XMP (L-Gln route): step 1/1. Catalyzes the synthesis of GMP from XMP. The protein is GMP synthase [glutamine-hydrolyzing] of Deinococcus geothermalis (strain DSM 11300 / CIP 105573 / AG-3a).